Here is a 423-residue protein sequence, read N- to C-terminus: Probable sodium/metabolite cotransporter BASS4, chloroplastic (423 aa).

A chloroplast-targeting transit peptide spans 1 to 55 (MVTTHHLCLLRSTVLSVPVRLRAPRAPPHPRLPTASASASSYHGPTHLRRLRPLR). The disordered stretch occupies residues 23–45 (APRAPPHPRLPTASASASSYHGP). The next 9 membrane-spanning stretches (helical) occupy residues 96-116 (FLPL…TLGC), 123-140 (LSKY…LTLR), 153-173 (AGLF…QFIM), 182-202 (FITG…GVTL), 212-232 (LALA…PLSL), 244-264 (LPTE…IILG), 284-301 (GFSV…WIQV), 315-335 (AFAV…AFNA), and 389-409 (LLVI…SIIV).

The protein belongs to the bile acid:sodium symporter (BASS) (TC 2.A.28) family.

Its subcellular location is the membrane. The protein localises to the plastid. It is found in the chloroplast envelope. In terms of biological role, may function as sodium-coupled metabolite transporter across the chloroplast envelope. This Oryza sativa subsp. indica (Rice) protein is Probable sodium/metabolite cotransporter BASS4, chloroplastic (BASS4).